The following is a 205-amino-acid chain: GTP cyclohydrolase 1 (205 aa).

3 residues coordinate Zn(2+): C93, H96, and C166.

The protein belongs to the GTP cyclohydrolase I family. In terms of assembly, homomer.

The enzyme catalyses GTP + H2O = 7,8-dihydroneopterin 3'-triphosphate + formate + H(+). It participates in cofactor biosynthesis; 7,8-dihydroneopterin triphosphate biosynthesis; 7,8-dihydroneopterin triphosphate from GTP: step 1/1. This chain is GTP cyclohydrolase 1, found in Mycobacterium leprae (strain Br4923).